A 281-amino-acid chain; its full sequence is Lectin (281 aa).

The first 26 residues, 1–26, serve as a signal peptide directing secretion; sequence MATYKLCSVLALSLTLFLLILNKVNS. Residues Asn-43 and Asn-139 are each glycosylated (N-linked (GlcNAc...) asparagine). Positions 269–281 are excised as a propeptide; it reads AVIPTSNHNTFAI.

It belongs to the leguminous lectin family. As to quaternary structure, homodimer. A minor C-terminal proteolytic processing site is observed at position 268.

Galactose and N-acetyllactosamine specific lectin. Binds to the H-2 blood type determinant fucosyl-N-acetyllactosamine. The sequence is that of Lectin from Erythrina corallodendron (Coral tree).